A 97-amino-acid polypeptide reads, in one-letter code: Large ribosomal subunit protein bL27 (97 aa).

Positions 1–12 (MLKMTLNNLQLF) are excised as a propeptide. The tract at residues 13-37 (AHKKGGGSTSNGRDSQAKRLGAKAA) is disordered.

It belongs to the bacterial ribosomal protein bL27 family. The N-terminus is cleaved by ribosomal processing cysteine protease Prp.

This is Large ribosomal subunit protein bL27 from Streptococcus pneumoniae serotype 2 (strain D39 / NCTC 7466).